The following is a 369-amino-acid chain: Sesquiterpene cyclase hepA (369 aa).

Residues Asp100, Asn248, Ser252, and Asp256 each coordinate Mg(2+). The DDXXD motif signature appears at 100–104 (DDEID). Positions 255–262 (NDLLSLRK) match the (N,D)D(L,I,V)X(S,T)XXXE motif motif.

This sequence belongs to the terpene synthase family. Mg(2+) serves as cofactor.

Functionally, sesquiterpene cyclase; part of the gene cluster that mediates the biosynthesis of heptelidic acid (HA), a sesquiterpene lactone that acts as an inhibitor of glyceraldehyde-3-phosphatedehydrogenase (GAPDH) and a growth inhibitor of the salt-tolerant lactic acid bacteria in soy sauce brewing. This is Sesquiterpene cyclase hepA from Aspergillus oryzae (strain ATCC 42149 / RIB 40) (Yellow koji mold).